Here is a 201-residue protein sequence, read N- to C-terminus: dTTP/UTP pyrophosphatase (201 aa).

Catalysis depends on Asp75, which acts as the Proton acceptor.

It belongs to the Maf family. YhdE subfamily. Requires a divalent metal cation as cofactor.

The protein localises to the cytoplasm. It carries out the reaction dTTP + H2O = dTMP + diphosphate + H(+). It catalyses the reaction UTP + H2O = UMP + diphosphate + H(+). Nucleoside triphosphate pyrophosphatase that hydrolyzes dTTP and UTP. May have a dual role in cell division arrest and in preventing the incorporation of modified nucleotides into cellular nucleic acids. The chain is dTTP/UTP pyrophosphatase from Pseudomonas fluorescens (strain ATCC BAA-477 / NRRL B-23932 / Pf-5).